The chain runs to 124 residues: Small ribosomal subunit protein uS12 (124 aa).

Asp-89 is subject to 3-methylthioaspartic acid.

The protein belongs to the universal ribosomal protein uS12 family. As to quaternary structure, part of the 30S ribosomal subunit. Contacts proteins S8 and S17. May interact with IF1 in the 30S initiation complex.

Its function is as follows. With S4 and S5 plays an important role in translational accuracy. Interacts with and stabilizes bases of the 16S rRNA that are involved in tRNA selection in the A site and with the mRNA backbone. Located at the interface of the 30S and 50S subunits, it traverses the body of the 30S subunit contacting proteins on the other side and probably holding the rRNA structure together. The combined cluster of proteins S8, S12 and S17 appears to hold together the shoulder and platform of the 30S subunit. This is Small ribosomal subunit protein uS12 from Arthrobacter sp. (strain FB24).